The following is a 406-amino-acid chain: Mitochondrial ribosome-associated GTPase 2 (406 aa).

A localized in the mitochondria region spans residues 15–406 (FEGVGHWALS…LGQGRQPLRW (392 aa)). The tract at residues 30–406 (KPSRLLPQQA…LGQGRQPLRW (377 aa)) is not localized in the mitochondria. One can recognise an Obg domain in the interval 70 to 224 (RYFVDYRRVL…RVLHLELKTV (155 aa)). In terms of domain architecture, OBG-type G spans 225-390 (AHAGMVGFPN…LLLHLKVLYD (166 aa)). GTP contacts are provided by residues 231 to 238 (GFPNAGKS), 256 to 260 (FTTLK), 278 to 281 (DIPG), 345 to 348 (NKID), and 371 to 373 (SAL). Residues S238 and T258 each coordinate Mg(2+).

It belongs to the TRAFAC class OBG-HflX-like GTPase superfamily. OBG GTPase family. In terms of assembly, associates with the mitochondrial ribosome large subunit; the association occurs in a GTP-dependent manner. It depends on Mg(2+) as a cofactor.

Its subcellular location is the mitochondrion. The protein resides in the mitochondrion inner membrane. Plays a role in the regulation of the mitochondrial ribosome assembly and of translational activity. Displays GTPase activity. Involved in the ribosome maturation process. This is Mitochondrial ribosome-associated GTPase 2 (MTG2) from Pongo abelii (Sumatran orangutan).